A 965-amino-acid chain; its full sequence is Forespore membrane adapter protein MUG56 (965 aa).

Positions 70 to 175 are disordered; the sequence is SFLMHKSTDE…VQNSNSTSTS (106 aa). Residues 82-101 are compositionally biased toward polar residues; sequence DTPSNLDSPSTQNVGSTNNT. Over residues 102 to 114 the composition is skewed to low complexity; the sequence is RASQSLLRRSSSF. The segment covering 124 to 158 has biased composition (polar residues); sequence THASTDNNPFSESSTLQPQTAERTSQQAVRSAITE. Residues 159-175 show a composition bias toward low complexity; it reads TTNPSVSVQNSNSTSTS. PH domains are found at residues 562-737 and 800-961; these read PTPV…EVAS and VIRM…KEIN.

Belongs to the SPO71 family.

It localises to the cytoplasm. The protein localises to the nucleus. The protein resides in the prospore membrane. May recruit a lipid transfer protein to the forespore membrane during sporulation, thereby aiding forespore membrane formation. Required for meiosis. This chain is Forespore membrane adapter protein MUG56, found in Schizosaccharomyces pombe (strain 972 / ATCC 24843) (Fission yeast).